The primary structure comprises 191 residues: Protein GrpE (191 aa).

Basic and acidic residues predominate over residues 1-10 (MNHEEQKVEA). Residues 1 to 28 (MNHEEQKVEAMEQVEAQPVEPTDVDSEV) form a disordered region.

The protein belongs to the GrpE family. Homodimer.

The protein resides in the cytoplasm. In terms of biological role, participates actively in the response to hyperosmotic and heat shock by preventing the aggregation of stress-denatured proteins, in association with DnaK and GrpE. It is the nucleotide exchange factor for DnaK and may function as a thermosensor. Unfolded proteins bind initially to DnaJ; upon interaction with the DnaJ-bound protein, DnaK hydrolyzes its bound ATP, resulting in the formation of a stable complex. GrpE releases ADP from DnaK; ATP binding to DnaK triggers the release of the substrate protein, thus completing the reaction cycle. Several rounds of ATP-dependent interactions between DnaJ, DnaK and GrpE are required for fully efficient folding. The polypeptide is Protein GrpE (Aeromonas hydrophila subsp. hydrophila (strain ATCC 7966 / DSM 30187 / BCRC 13018 / CCUG 14551 / JCM 1027 / KCTC 2358 / NCIMB 9240 / NCTC 8049)).